The chain runs to 303 residues: Elongation factor Ts (303 aa).

Positions threonine 81–valine 84 are involved in Mg(2+) ion dislocation from EF-Tu.

It belongs to the EF-Ts family.

The protein localises to the cytoplasm. In terms of biological role, associates with the EF-Tu.GDP complex and induces the exchange of GDP to GTP. It remains bound to the aminoacyl-tRNA.EF-Tu.GTP complex up to the GTP hydrolysis stage on the ribosome. In Mesomycoplasma hyopneumoniae (strain J / ATCC 25934 / NCTC 10110) (Mycoplasma hyopneumoniae), this protein is Elongation factor Ts.